A 101-amino-acid polypeptide reads, in one-letter code: Small ribosomal subunit protein uS14 (101 aa).

This sequence belongs to the universal ribosomal protein uS14 family. As to quaternary structure, part of the 30S ribosomal subunit. Contacts proteins S3 and S10.

Binds 16S rRNA, required for the assembly of 30S particles and may also be responsible for determining the conformation of the 16S rRNA at the A site. The chain is Small ribosomal subunit protein uS14 from Alcanivorax borkumensis (strain ATCC 700651 / DSM 11573 / NCIMB 13689 / SK2).